Reading from the N-terminus, the 421-residue chain is Cyclin-A1 (421 aa).

The interval 1 to 21 (MHRQSSKSGVALPPVGQGPDA) is disordered.

It belongs to the cyclin family. Cyclin AB subfamily. In terms of assembly, interacts with INCA1 and KLHDC9. Interacts with the CDK2 and CDC2 protein kinases to form a serine/threonine kinase holoenzyme complex. The cyclin subunit imparts substrate specificity to the complex. Found in a complex with CDK2, CABLES1 and CCNE1. Post-translationally, polyubiquitinated via 'Lys-11'-linked ubiquitin by the anaphase-promoting complex (APC/C), leading to its degradation by the proteasome. Deubiquitinated and stabilized by USP37 enables entry into S phase. Ubiquitinated during the G1 phase by the SCF(FBXO31) complex, leading to its proteasomal degradation. As to expression, testis and ovaries.

The protein resides in the nucleus. The protein localises to the cytoplasm. Its subcellular location is the cytoskeleton. It is found in the spindle. Functionally, may be involved in the control of the cell cycle at the G1/S (start) and G2/M (mitosis) transitions. May primarily function in the control of the germline meiotic cell cycle and additionally in the control of mitotic cell cycle in some somatic cells. The polypeptide is Cyclin-A1 (Ccna1) (Mus musculus (Mouse)).